A 264-amino-acid polypeptide reads, in one-letter code: 5'-nucleotidase SurE (264 aa).

Residues Asp10, Asp11, Ser43, and Asn99 each coordinate a divalent metal cation.

This sequence belongs to the SurE nucleotidase family. The cofactor is a divalent metal cation.

It localises to the cytoplasm. It carries out the reaction a ribonucleoside 5'-phosphate + H2O = a ribonucleoside + phosphate. Functionally, nucleotidase that shows phosphatase activity on nucleoside 5'-monophosphates. This Methanococcus maripaludis (strain C5 / ATCC BAA-1333) protein is 5'-nucleotidase SurE.